A 524-amino-acid chain; its full sequence is Bifunctional purine biosynthesis protein PurH (524 aa).

An MGS-like domain is found at 1–145 (MIKQALLSVS…KNHRDVTVIV (145 aa)).

The protein belongs to the PurH family.

The enzyme catalyses (6R)-10-formyltetrahydrofolate + 5-amino-1-(5-phospho-beta-D-ribosyl)imidazole-4-carboxamide = 5-formamido-1-(5-phospho-D-ribosyl)imidazole-4-carboxamide + (6S)-5,6,7,8-tetrahydrofolate. It carries out the reaction IMP + H2O = 5-formamido-1-(5-phospho-D-ribosyl)imidazole-4-carboxamide. It functions in the pathway purine metabolism; IMP biosynthesis via de novo pathway; 5-formamido-1-(5-phospho-D-ribosyl)imidazole-4-carboxamide from 5-amino-1-(5-phospho-D-ribosyl)imidazole-4-carboxamide (10-formyl THF route): step 1/1. It participates in purine metabolism; IMP biosynthesis via de novo pathway; IMP from 5-formamido-1-(5-phospho-D-ribosyl)imidazole-4-carboxamide: step 1/1. This Cupriavidus metallidurans (strain ATCC 43123 / DSM 2839 / NBRC 102507 / CH34) (Ralstonia metallidurans) protein is Bifunctional purine biosynthesis protein PurH.